Here is a 303-residue protein sequence, read N- to C-terminus: tRNA dimethylallyltransferase (303 aa).

An ATP-binding site is contributed by 12–19; that stretch reads GTTASGKS. 14 to 19 lines the substrate pocket; sequence TASGKS. Positions 37–40 are interaction with substrate tRNA; it reads DSRQ.

Belongs to the IPP transferase family. In terms of assembly, monomer. Requires Mg(2+) as cofactor.

It carries out the reaction adenosine(37) in tRNA + dimethylallyl diphosphate = N(6)-dimethylallyladenosine(37) in tRNA + diphosphate. In terms of biological role, catalyzes the transfer of a dimethylallyl group onto the adenine at position 37 in tRNAs that read codons beginning with uridine, leading to the formation of N6-(dimethylallyl)adenosine (i(6)A). This is tRNA dimethylallyltransferase from Synechocystis sp. (strain ATCC 27184 / PCC 6803 / Kazusa).